We begin with the raw amino-acid sequence, 123 residues long: Small ribosomal subunit protein uS12 (123 aa).

Position 89 is a 3-methylthioaspartic acid (D89). Positions 102-123 (LDTQGVKDRKQGRSKYGAKRPK) are disordered. Basic residues predominate over residues 113–123 (GRSKYGAKRPK).

This sequence belongs to the universal ribosomal protein uS12 family. Part of the 30S ribosomal subunit. Contacts proteins S8 and S17. May interact with IF1 in the 30S initiation complex.

In terms of biological role, with S4 and S5 plays an important role in translational accuracy. Its function is as follows. Interacts with and stabilizes bases of the 16S rRNA that are involved in tRNA selection in the A site and with the mRNA backbone. Located at the interface of the 30S and 50S subunits, it traverses the body of the 30S subunit contacting proteins on the other side and probably holding the rRNA structure together. The combined cluster of proteins S8, S12 and S17 appears to hold together the shoulder and platform of the 30S subunit. This Magnetococcus marinus (strain ATCC BAA-1437 / JCM 17883 / MC-1) protein is Small ribosomal subunit protein uS12.